A 110-amino-acid polypeptide reads, in one-letter code: UPF0060 membrane protein Swit_0423 (110 aa).

4 consecutive transmembrane segments (helical) span residues 6-26 (LFIF…FWAW), 29-49 (LGKS…FAWL), 61-81 (AFAA…WAVE), and 90-110 (LIGV…PRTA).

The protein belongs to the UPF0060 family.

The protein resides in the cell inner membrane. The chain is UPF0060 membrane protein Swit_0423 from Rhizorhabdus wittichii (strain DSM 6014 / CCUG 31198 / JCM 15750 / NBRC 105917 / EY 4224 / RW1) (Sphingomonas wittichii).